The sequence spans 503 residues: Aromatase (503 aa).

The next 3 membrane-spanning stretches (helical) occupy residues 19-39 (EVAPVASIAILLLTGFLLLVW), 51-71 (GYFLGIGPLISHCRFLWMGIG), and 303-323 (MLIAAPDTMSVSVFFMLFLIA). Aspartate 309 and methionine 374 together coordinate substrate. Residue cysteine 437 participates in heme binding.

It belongs to the cytochrome P450 family. Requires heme as cofactor.

Its subcellular location is the endoplasmic reticulum membrane. The protein localises to the microsome membrane. The catalysed reaction is testosterone + 3 reduced [NADPH--hemoprotein reductase] + 3 O2 = 17beta-estradiol + formate + 3 oxidized [NADPH--hemoprotein reductase] + 4 H2O + 4 H(+). The enzyme catalyses androst-4-ene-3,17-dione + 3 reduced [NADPH--hemoprotein reductase] + 3 O2 = estrone + formate + 3 oxidized [NADPH--hemoprotein reductase] + 4 H2O + 4 H(+). It catalyses the reaction androst-4-ene-3,17-dione + reduced [NADPH--hemoprotein reductase] + O2 = 19-hydroxyandrost-4-ene-3,17-dione + oxidized [NADPH--hemoprotein reductase] + H2O + H(+). It carries out the reaction 19-hydroxyandrost-4-ene-3,17-dione + reduced [NADPH--hemoprotein reductase] + O2 = 19-oxo-androst-4-ene-3,17-dione + oxidized [NADPH--hemoprotein reductase] + 2 H2O + H(+). The catalysed reaction is 19-oxo-androst-4-ene-3,17-dione + reduced [NADPH--hemoprotein reductase] + O2 = estrone + formate + oxidized [NADPH--hemoprotein reductase] + H2O + 2 H(+). The enzyme catalyses estrone + reduced [NADPH--hemoprotein reductase] + O2 = 2-hydroxyestrone + oxidized [NADPH--hemoprotein reductase] + H2O + H(+). It catalyses the reaction 17beta-hydroxy-5alpha-androstan-3-one + reduced [NADPH--hemoprotein reductase] + O2 = 17beta,19-dihydroxy-3-oxo-5alpha-androstanone + oxidized [NADPH--hemoprotein reductase] + H2O + H(+). It carries out the reaction 17beta,19-dihydroxy-3-oxo-5alpha-androstanone + reduced [NADPH--hemoprotein reductase] + O2 = 17beta-hydroxy-3,19-dioxo-5alpha-androstanone + oxidized [NADPH--hemoprotein reductase] + 2 H2O + H(+). The catalysed reaction is 17beta-hydroxy-3,19-dioxo-5alpha-androstanone + reduced [NADPH--hemoprotein reductase] + O2 = 17beta-hydroxy-3-oxo-19-nor-5alpha-androst-1-ene + formate + oxidized [NADPH--hemoprotein reductase] + H2O + 2 H(+). Its pathway is steroid hormone biosynthesis. Its function is as follows. A cytochrome P450 monooxygenase that catalyzes the conversion of C19 androgens, androst-4-ene-3,17-dione (androstenedione) and testosterone to the C18 estrogens, estrone and estradiol, respectively. Catalyzes three successive oxidations of C19 androgens: two conventional oxidations at C19 yielding 19-hydroxy and 19-oxo/19-aldehyde derivatives, followed by a third oxidative aromatization step that involves C1-beta hydrogen abstraction combined with cleavage of the C10-C19 bond to yield a phenolic A ring and formic acid. Alternatively, the third oxidative reaction yields a 19-norsteroid and formic acid. Converts dihydrotestosterone to delta1,10-dehydro 19-nordihydrotestosterone and may play a role in homeostasis of this potent androgen. Also displays 2-hydroxylase activity toward estrone. Mechanistically, uses molecular oxygen inserting one oxygen atom into a substrate, and reducing the second into a water molecule, with two electrons provided by NADPH via cytochrome P450 reductase (CPR; NADPH-ferrihemoprotein reductase). This Leucopleurus acutus (Atlantic white-sided dolphin) protein is Aromatase (CYP19A1).